A 291-amino-acid chain; its full sequence is ATP synthase gamma chain (291 aa).

It belongs to the ATPase gamma chain family. F-type ATPases have 2 components, CF(1) - the catalytic core - and CF(0) - the membrane proton channel. CF(1) has five subunits: alpha(3), beta(3), gamma(1), delta(1), epsilon(1). CF(0) has three main subunits: a, b and c.

The protein resides in the cell membrane. In terms of biological role, produces ATP from ADP in the presence of a proton gradient across the membrane. The gamma chain is believed to be important in regulating ATPase activity and the flow of protons through the CF(0) complex. This chain is ATP synthase gamma chain, found in Streptococcus pyogenes serotype M3 (strain ATCC BAA-595 / MGAS315).